The primary structure comprises 485 residues: E3 ubiquitin-protein ligase TRIM68 (485 aa).

The RING-type zinc finger occupies 16 to 61 (CPICMTFLREPVSISCGHTFCHSCLSGLWKLPGESQNLSYTCPLCR). Residues 93 to 134 (LKTDVCDLHKEQLTMFCKEDDMVTCEACKQSPEHEAHSVVPI) form a B box-type zinc finger. Positions 98, 101, 120, and 126 each coordinate Zn(2+). Residues 144-226 (KLQQALEHLR…EQEKGETASK (83 aa)) adopt a coiled-coil conformation. One can recognise a B30.2/SPRY domain in the interval 285–483 (LKTDCRVLGL…TPLTICTLGG (199 aa)).

Belongs to the TRIM/RBCC family. In terms of assembly, interacts with AR/androgen receptor (via ligand-binding domain). Interacts with KAT5/TIP60. Post-translationally, auto-ubiquitinated.

The protein localises to the cytoplasm. The protein resides in the perinuclear region. It is found in the nucleus. It carries out the reaction S-ubiquitinyl-[E2 ubiquitin-conjugating enzyme]-L-cysteine + [acceptor protein]-L-lysine = [E2 ubiquitin-conjugating enzyme]-L-cysteine + N(6)-ubiquitinyl-[acceptor protein]-L-lysine.. It functions in the pathway protein modification; protein ubiquitination. Functionally, functions as a ubiquitin E3 ligase. Acts as a coactivator of androgen receptor (AR) depending on its ubiquitin ligase activity. This is E3 ubiquitin-protein ligase TRIM68 (Trim68) from Mus musculus (Mouse).